A 684-amino-acid polypeptide reads, in one-letter code: Extracellular lipase (684 aa).

The first 48 residues, 1–48 (MKKKLIYAAVVSALLAGCGGSDDNKGDTSSYLDYLLTGSNAVGPSALA), serve as a signal peptide directing secretion. 2 disordered regions span residues 321–405 (SIPV…ADWG) and 462–493 (QRERLRPGAGPDLEDLCRHAGGQEGGAGGDRS). Basic and acidic residues predominate over residues 385–405 (ADCRSDPPERAAGRGEQADWG). Catalysis depends on Ser568, which acts as the Nucleophile.

The protein belongs to the AB hydrolase superfamily. Lipase family. In terms of assembly, monomer.

It localises to the secreted. It catalyses the reaction a triacylglycerol + H2O = a diacylglycerol + a fatty acid + H(+). The optimum chain lengths for the acyl moiety is C6 for ester hydrolysis and C6 and C8 for triacylglycerol hydrolysis. This chain is Extracellular lipase, found in Aeromonas hydrophila.